The primary structure comprises 873 residues: Alanine--tRNA ligase (873 aa).

The Zn(2+) site is built by H559, H563, C661, and H665.

This sequence belongs to the class-II aminoacyl-tRNA synthetase family. In terms of assembly, homotetramer. The cofactor is Zn(2+).

Its subcellular location is the cytoplasm. The enzyme catalyses tRNA(Ala) + L-alanine + ATP = L-alanyl-tRNA(Ala) + AMP + diphosphate. Functionally, catalyzes the attachment of alanine to tRNA(Ala) in a two-step reaction: alanine is first activated by ATP to form Ala-AMP and then transferred to the acceptor end of tRNA(Ala). Also edits incorrectly charged Ser-tRNA(Ala) and Gly-tRNA(Ala) via its editing domain. This Wigglesworthia glossinidia brevipalpis protein is Alanine--tRNA ligase.